Reading from the N-terminus, the 279-residue chain is Acetyl-coenzyme A carboxylase carboxyl transferase subunit beta (279 aa).

One can recognise a CoA carboxyltransferase N-terminal domain in the interval 27 to 279 (LFLACPYCGT…IVKLHHRTEI (253 aa)). Zn(2+) contacts are provided by Cys31, Cys34, Cys49, and Cys52. The segment at 31-52 (CPYCGTQMYNKQLGDYRVCAKC) adopts a C4-type zinc-finger fold.

Belongs to the AccD/PCCB family. In terms of assembly, acetyl-CoA carboxylase is a heterohexamer composed of biotin carboxyl carrier protein (AccB), biotin carboxylase (AccC) and two subunits each of ACCase subunit alpha (AccA) and ACCase subunit beta (AccD). Zn(2+) is required as a cofactor.

The protein resides in the cytoplasm. The catalysed reaction is N(6)-carboxybiotinyl-L-lysyl-[protein] + acetyl-CoA = N(6)-biotinyl-L-lysyl-[protein] + malonyl-CoA. Its pathway is lipid metabolism; malonyl-CoA biosynthesis; malonyl-CoA from acetyl-CoA: step 1/1. In terms of biological role, component of the acetyl coenzyme A carboxylase (ACC) complex. Biotin carboxylase (BC) catalyzes the carboxylation of biotin on its carrier protein (BCCP) and then the CO(2) group is transferred by the transcarboxylase to acetyl-CoA to form malonyl-CoA. This is Acetyl-coenzyme A carboxylase carboxyl transferase subunit beta from Leuconostoc citreum (strain KM20).